The primary structure comprises 198 residues: Small ribosomal subunit protein uS4 (198 aa).

Residues Thr-90 to Asn-152 enclose the S4 RNA-binding domain.

The protein belongs to the universal ribosomal protein uS4 family. As to quaternary structure, part of the 30S ribosomal subunit. Contacts protein S5. The interaction surface between S4 and S5 is involved in control of translational fidelity.

Its function is as follows. One of the primary rRNA binding proteins, it binds directly to 16S rRNA where it nucleates assembly of the body of the 30S subunit. With S5 and S12 plays an important role in translational accuracy. The protein is Small ribosomal subunit protein uS4 of Finegoldia magna (strain ATCC 29328 / DSM 20472 / WAL 2508) (Peptostreptococcus magnus).